The primary structure comprises 63 residues: Large ribosomal subunit protein uL29 (63 aa).

This sequence belongs to the universal ribosomal protein uL29 family.

The polypeptide is Large ribosomal subunit protein uL29 (Escherichia coli O8 (strain IAI1)).